We begin with the raw amino-acid sequence, 238 residues long: Ribosomal RNA small subunit methyltransferase G (238 aa).

Residues Gly77, Phe82, 128-129 (AE), and Arg147 each bind S-adenosyl-L-methionine.

It belongs to the methyltransferase superfamily. RNA methyltransferase RsmG family.

It localises to the cytoplasm. Functionally, specifically methylates the N7 position of guanine in position 535 of 16S rRNA. The sequence is that of Ribosomal RNA small subunit methyltransferase G from Exiguobacterium sibiricum (strain DSM 17290 / CCUG 55495 / CIP 109462 / JCM 13490 / 255-15).